The primary structure comprises 214 residues: Ribosomal RNA small subunit methyltransferase G (214 aa).

Residues Gly77, Phe82, 128–129 (VE), and Arg143 contribute to the S-adenosyl-L-methionine site.

The protein belongs to the methyltransferase superfamily. RNA methyltransferase RsmG family.

Its subcellular location is the cytoplasm. The catalysed reaction is guanosine(527) in 16S rRNA + S-adenosyl-L-methionine = N(7)-methylguanosine(527) in 16S rRNA + S-adenosyl-L-homocysteine. Specifically methylates the N7 position of guanine in position 527 of 16S rRNA. This Nitrosomonas europaea (strain ATCC 19718 / CIP 103999 / KCTC 2705 / NBRC 14298) protein is Ribosomal RNA small subunit methyltransferase G.